The following is a 146-amino-acid chain: Ribosome maturation factor RimP (146 aa).

This sequence belongs to the RimP family.

The protein resides in the cytoplasm. In terms of biological role, required for maturation of 30S ribosomal subunits. The protein is Ribosome maturation factor RimP of Helicobacter pylori (strain HPAG1).